Consider the following 151-residue polypeptide: MSSESRSASSPVAPDDIEEGVVLRPKFDAHGLVTVVATDARTGDVLMVAFMNDEALDRTIQTGEAWYYSRSRKRLWKKGETSGHIQKVLEMRVDCDQDAVWIKVDQTGGAACHTGRHSCFYRRIDRGGDGAPVLIETDAERKFDPDKVYGK.

Residue Asp94 participates in Mg(2+) binding. Residue Cys95 coordinates Zn(2+). Asp96 and Asp98 together coordinate Mg(2+). The Zn(2+) site is built by Cys112 and Cys119.

Belongs to the PRA-CH family. Homodimer. Mg(2+) serves as cofactor. Zn(2+) is required as a cofactor.

It localises to the cytoplasm. The catalysed reaction is 1-(5-phospho-beta-D-ribosyl)-5'-AMP + H2O = 1-(5-phospho-beta-D-ribosyl)-5-[(5-phospho-beta-D-ribosylamino)methylideneamino]imidazole-4-carboxamide. Its pathway is amino-acid biosynthesis; L-histidine biosynthesis; L-histidine from 5-phospho-alpha-D-ribose 1-diphosphate: step 3/9. Its function is as follows. Catalyzes the hydrolysis of the adenine ring of phosphoribosyl-AMP. This Rhodopseudomonas palustris (strain TIE-1) protein is Phosphoribosyl-AMP cyclohydrolase.